An 805-amino-acid chain; its full sequence is RFX-like transcription factor daf-19 (805 aa).

Positions 1 to 14 (MTNEEPVPSTSSVL) are enriched in polar residues. Positions 1–113 (MTNEEPVPST…TPRKKMEPED (113 aa)) are disordered. Basic and acidic residues predominate over residues 19–92 (KNVKIETPSR…DSKSLSKETH (74 aa)). Residues 93–104 (NTISTRSSSSGT) are compositionally biased toward polar residues. The RFX-type winged-helix DNA-binding region spans 260-334 (TVNWLFENYE…YHYYGIRLKD (75 aa)).

This sequence belongs to the RFX family. As to expression, ciliated sensory neurons. Expressed in the male tail HOB and RnB neurons but not in male-specific CEM head neurons or other ciliated neurons.

Its subcellular location is the nucleus. Its function is as follows. Probable transcription factor. May regulate some genes of ciliated sensory neurons. May activate the expression of the shared components of sensory cilia, but not the cell-type-specific expression. Together with transcription factor atf-7, involved in regulation of the serotonergic response of ADF neurons to pathogenic food. In terms of biological role, involved in male mating behavior; may play a role in functional specialization of PKD ciliated sensory neurons. This Caenorhabditis elegans protein is RFX-like transcription factor daf-19.